A 54-amino-acid polypeptide reads, in one-letter code: Ferredoxin (54 aa).

4Fe-4S ferredoxin-type domains lie at 2–25 and 26–54; these read YVIN…IQQG and SIYA…NPED. Positions 8, 11, 14, 18, 35, 38, 41, and 45 each coordinate [4Fe-4S] cluster.

The cofactor is [4Fe-4S] cluster.

Ferredoxins are iron-sulfur proteins that transfer electrons in a wide variety of metabolic reactions. The polypeptide is Ferredoxin (Peptoniphilus asaccharolyticus (Peptostreptococcus asaccharolyticus)).